A 216-amino-acid polypeptide reads, in one-letter code: Proenkephalin-A-B (216 aa).

5 propeptides span residues 64-85 (MDEL…LAKN), 93-131 (EYDS…GEMN), 144-155 (STDLEDETRGIQ), 165-175 (VGRPEWWQDYQ), and 183-207 (TRFT…PDME). Residues 114–133 (PESAIYHDNNSETPGEMNKR) form a disordered region.

This sequence belongs to the opioid neuropeptide precursor family. The N-terminal domain contains 6 conserved cysteines thought to be involved in disulfide bonding and/or processing.

It localises to the secreted. In terms of biological role, enkephalin neuropeptides compete with and mimic the effects of opiate drugs. They play a role in a number of physiologic functions, including pain perception and responses to stress. The protein is Proenkephalin-A-B (penk-b) of Xenopus laevis (African clawed frog).